A 352-amino-acid chain; its full sequence is Carbohydrate sulfotransferase 11 (352 aa).

Topologically, residues 1-16 (MKQTILDLMRMSRICR) are cytoplasmic. A helical; Signal-anchor for type II membrane protein membrane pass occupies residues 17 to 37 (MVLATCLGSFILVIFYFQSMF). At 38 to 352 (QPVMRRNPFA…YSIPSYLKLQ (315 aa)) the chain is on the lumenal side. 3'-phosphoadenylyl sulfate-binding positions include 124 to 130 (PKVACTN) and 186 to 194 (REPFERLVS). Asn-205, Asn-223, Asn-321, and Asn-342 each carry an N-linked (GlcNAc...) asparagine glycan.

Belongs to the sulfotransferase 2 family.

Its subcellular location is the golgi apparatus membrane. The enzyme catalyses chondroitin beta-D-glucuronate + n 3'-phosphoadenylyl sulfate = chondroitin 4'-sulfate + n adenosine 3',5'-bisphosphate + n H(+). In terms of biological role, catalyzes the transfer of sulfate to position 4 of the N-acetylgalactosamine (GalNAc) residue of chondroitin. This is Carbohydrate sulfotransferase 11 (chst11) from Danio rerio (Zebrafish).